A 902-amino-acid chain; its full sequence is Protein translocase subunit SecA (902 aa).

ATP contacts are provided by residues glutamine 87, 105–109 (GEGKT), and aspartate 512. Positions 847–902 (DAERLARQQQLSHLDDQSAAAQEMASQTGDRKIGRNDPCPCGSGKKYKQCHGRLNA) are disordered. Zn(2+) is bound by residues cysteine 885, cysteine 887, cysteine 896, and histidine 897. Residues 891–902 (KKYKQCHGRLNA) show a composition bias toward basic residues.

The protein belongs to the SecA family. As to quaternary structure, monomer and homodimer. Part of the essential Sec protein translocation apparatus which comprises SecA, SecYEG and auxiliary proteins SecDF-YajC and YidC. It depends on Zn(2+) as a cofactor.

The protein localises to the cell inner membrane. It localises to the cytoplasm. It carries out the reaction ATP + H2O + cellular proteinSide 1 = ADP + phosphate + cellular proteinSide 2.. Part of the Sec protein translocase complex. Interacts with the SecYEG preprotein conducting channel. Has a central role in coupling the hydrolysis of ATP to the transfer of proteins into and across the cell membrane, serving both as a receptor for the preprotein-SecB complex and as an ATP-driven molecular motor driving the stepwise translocation of polypeptide chains across the membrane. In Edwardsiella ictaluri (strain 93-146), this protein is Protein translocase subunit SecA.